The following is an 88-amino-acid chain: Carboxysome shell vertex protein CsoS4A (88 aa).

Residues 1–76 (MLICKVLKPL…SDLTIVGIID (76 aa)) enclose the BMV domain.

It belongs to the CcmL/EutN family. CsoS4 subfamily. Homopentamer.

Its subcellular location is the carboxysome. Functionally, probably forms vertices in the carboxysome, a polyhedral inclusion where RuBisCO (ribulose bisphosphate carboxylase, cbbL-cbbS) is sequestered. Has been modeled to induce curvature upon insertion into an otherwise flat hexagonal layer of major carboxysome subunits. Has not been identified in purified carboxysomes; it is expected to be present in very low amounts. In Prochlorococcus marinus subsp. pastoris (strain CCMP1986 / NIES-2087 / MED4), this protein is Carboxysome shell vertex protein CsoS4A.